Reading from the N-terminus, the 667-residue chain is NADPH--cytochrome P450 reductase (667 aa).

Topologically, residues 1–8 (MEILESID) are lumenal. A helical transmembrane segment spans residues 9–29 (FIEVLILDNLGAIIIVAVIVG). Over 30–667 (TYLYMNKPPP…HGRYLQDVWF (638 aa)) the chain is Cytoplasmic. In terms of domain architecture, Flavodoxin-like spans 72-215 (MKIFFGTQTR…DFNRWKKDMW (144 aa)). FMN contacts are provided by residues 164–173 (LGNKTYEHYN) and Asp199. In terms of domain architecture, FAD-binding FR-type spans 277 to 511 (KNPYYAEVLE…FVRESHFKLP (235 aa)). Arg297 is an NADP(+) binding site. FAD is bound by residues 468 to 470 (TSV) and 484 to 487 (GVAS). Residues Thr527, 586 to 587 (SR), and 592 to 596 (KVYVQ) each bind NADP(+). Trp666 is an FAD binding site.

It belongs to the NADPH--cytochrome P450 reductase family. The protein in the N-terminal section; belongs to the flavodoxin family. This sequence in the C-terminal section; belongs to the flavoprotein pyridine nucleotide cytochrome reductase family. Requires FAD as cofactor. FMN is required as a cofactor.

It localises to the endoplasmic reticulum membrane. It catalyses the reaction 2 oxidized [cytochrome P450] + NADPH = 2 reduced [cytochrome P450] + NADP(+) + H(+). Its function is as follows. This enzyme is required for electron transfer from NADP to cytochrome P450 in microsomes. It can also provide electron transfer to heme oxygenase and cytochrome B5. The protein is NADPH--cytochrome P450 reductase (redB) of Dictyostelium discoideum (Social amoeba).